The following is a 151-amino-acid chain: Sec-independent protein translocase protein TatB (151 aa).

Residues 1-21 traverse the membrane as a helical segment; that stretch reads MFDVSFTELMVIGVIALVVIG. A disordered region spans residues 66-151; it reads MDETARSMQT…DKTPPTGSAT (86 aa). The segment covering 93 to 103 has biased composition (basic and acidic residues); the sequence is AELDDTARDAS. 2 stretches are compositionally biased toward low complexity: residues 109–122 and 133–151; these read ADAPAEPAPAVASD and APPAAATPADKTPPTGSAT.

The protein belongs to the TatB family. As to quaternary structure, the Tat system comprises two distinct complexes: a TatABC complex, containing multiple copies of TatA, TatB and TatC subunits, and a separate TatA complex, containing only TatA subunits. Substrates initially bind to the TatABC complex, which probably triggers association of the separate TatA complex to form the active translocon.

It is found in the cell inner membrane. Functionally, part of the twin-arginine translocation (Tat) system that transports large folded proteins containing a characteristic twin-arginine motif in their signal peptide across membranes. Together with TatC, TatB is part of a receptor directly interacting with Tat signal peptides. TatB may form an oligomeric binding site that transiently accommodates folded Tat precursor proteins before their translocation. The polypeptide is Sec-independent protein translocase protein TatB (Bordetella parapertussis (strain 12822 / ATCC BAA-587 / NCTC 13253)).